A 296-amino-acid chain; its full sequence is UDP-N-acetylglucosamine transporter TMEM241 homolog (296 aa).

Transmembrane regions (helical) follow at residues 7-29, 41-61, 67-87, 93-113, 126-146, 147-167, 187-207, 217-237, 248-266, and 272-291; these read AVGL…VLSV, WQTL…WLEI, SDVV…YAGS, LPIP…YGFQ, IFSI…DPQF, DADG…YKVF, VFSV…ISAL, FHSG…ASVK, ASWN…LIYF, and VPLT…LVYA.

Belongs to the nucleotide-sugar transporter family. SLC35A subfamily.

The protein localises to the golgi apparatus. It is found in the cis-Golgi network membrane. Functionally, golgi-localized UDP-N-acetylglucosamine (UDP-GlcNAc) transporter that transports UDP-N-acetylglucosamine into Golgi lumen. This Xenopus laevis (African clawed frog) protein is UDP-N-acetylglucosamine transporter TMEM241 homolog (tmem241).